A 358-amino-acid polypeptide reads, in one-letter code: Transcriptional repressor protein KorB (358 aa).

Residues 1 to 42 (MTAAQAKTTKKNTAAAAQEAAGAAQPSGLGLDSIGDLSSLLD) show a composition bias toward low complexity. Disordered regions lie at residues 1-79 (MTAA…FSPE) and 256-305 (DPNT…DKLK). The span at 275 to 285 (AGDGQDGEDGD) shows a compositional bias: acidic residues. The segment covering 286–305 (QDGKDAKEKGAKEPDPDKLK) has biased composition (basic and acidic residues).

It belongs to the ParB family.

In terms of biological role, in conjunction with KorA, inhibits the transcription of the kilA, trfA and korAB operons. Is also involved in the negative control of the kilB operon. This chain is Transcriptional repressor protein KorB (korB), found in Escherichia coli.